The primary structure comprises 403 residues: Phosphopentomutase (403 aa).

Aspartate 13, aspartate 298, histidine 303, aspartate 339, histidine 340, and histidine 351 together coordinate Mn(2+).

This sequence belongs to the phosphopentomutase family. Mn(2+) is required as a cofactor.

The protein localises to the cytoplasm. It carries out the reaction 2-deoxy-alpha-D-ribose 1-phosphate = 2-deoxy-D-ribose 5-phosphate. The enzyme catalyses alpha-D-ribose 1-phosphate = D-ribose 5-phosphate. The protein operates within carbohydrate degradation; 2-deoxy-D-ribose 1-phosphate degradation; D-glyceraldehyde 3-phosphate and acetaldehyde from 2-deoxy-alpha-D-ribose 1-phosphate: step 1/2. Isomerase that catalyzes the conversion of deoxy-ribose 1-phosphate (dRib-1-P) and ribose 1-phosphate (Rib-1-P) to deoxy-ribose 5-phosphate (dRib-5-P) and ribose 5-phosphate (Rib-5-P), respectively. This is Phosphopentomutase from Streptococcus pyogenes serotype M18 (strain MGAS8232).